The chain runs to 116 residues: Translation initiation factor 1A (116 aa).

Positions Met-1 to Asp-25 are disordered. Residues Gly-17–Gly-91 form the S1-like domain.

It belongs to the eIF-1A family.

Functionally, seems to be required for maximal rate of protein biosynthesis. Enhances ribosome dissociation into subunits and stabilizes the binding of the initiator Met-tRNA(I) to 40 S ribosomal subunits. The protein is Translation initiation factor 1A (eIF1A) of Desulfurococcus amylolyticus (strain DSM 18924 / JCM 16383 / VKM B-2413 / 1221n) (Desulfurococcus kamchatkensis).